Consider the following 149-residue polypeptide: Arginine repressor (149 aa).

The protein belongs to the ArgR family.

The protein resides in the cytoplasm. It functions in the pathway amino-acid biosynthesis; L-arginine biosynthesis [regulation]. Functionally, regulates arginine biosynthesis genes. This chain is Arginine repressor, found in Listeria innocua serovar 6a (strain ATCC BAA-680 / CLIP 11262).